The primary structure comprises 111 residues: Propane 2-monooxygenase, effector component (111 aa).

Belongs to the TmoD/XamoD family. In terms of assembly, the propane 2-monooxygenase multicomponent enzyme system is composed of an electron transfer component and a monooxygenase component interacting with the effector protein PrmD. The electron transfer component is composed of a reductase (PrmB), and the monooxygenase component is formed by a large subunit (PrmA) and a small subunit (PrmC).

Functionally, effector component of the propane 2-monooxygenase multicomponent enzyme system which is involved in the degradation of propane via the O2-dependent hydroxylation of propane. This is Propane 2-monooxygenase, effector component from Gordonia sp. (strain TY-5).